We begin with the raw amino-acid sequence, 853 residues long: Probable inorganic carbon transporter subunit DabA (853 aa).

The disordered stretch occupies residues 1 to 21; the sequence is MSHANSEETMMNTAVAHPSTS. Residues 7–21 are compositionally biased toward polar residues; it reads EETMMNTAVAHPSTS. C364, D366, H546, and C561 together coordinate Zn(2+).

The protein belongs to the inorganic carbon transporter (TC 9.A.2) DabA family. As to quaternary structure, forms a complex with DabB. Requires Zn(2+) as cofactor.

The protein localises to the cell inner membrane. Functionally, part of an energy-coupled inorganic carbon pump. In Methylovorus glucosotrophus (strain SIP3-4), this protein is Probable inorganic carbon transporter subunit DabA.